The following is a 398-amino-acid chain: MADYWKSQPKKFCDYCKCWIADNRPSIDFHERGKNHKENVAKRISEIRKKSMEKAKEEENMSKEFAAMEEAAMKAYQEDLKRLGIKPDDVGPSSTLNKTQSITAEGKEKKEKKEKKEKKEKKKKTREGTSESPKTEPKEWVQGLSPEGYTYYYNTKTGESQWEKPKGFQGNSKTSHTGSVWVEGVSEDGHTYYYNTQTGVSTWEKPDGFVSSSNDNSQRGKHSEEADSRASESDSEQEDSESEGQSPGTNLKRKGENDEESEKEKSPKAKKLSPYGKWREVKWQEVKWQEEAVDKEKIALASKEASSDESKTDTYGKWKAIKNEEEEEPDEKVDLELPSTEGDSALPPVLDVPEDATVIFKEKTVTSLGDLTEGVPTFKKREFENGKSRNLRQRLDDQ.

The segment at Lys11–Lys42 adopts a Matrin-type zinc-finger fold. Disordered stretches follow at residues Gly84–Val182, Val200–Pro274, Leu300–Leu350, and Lys379–Gln398. The segment covering Pro92–Thr103 has biased composition (polar residues). Residues Lys112–Thr125 show a composition bias toward basic residues. The span at Arg126 to Glu139 shows a compositional bias: basic and acidic residues. WW domains follow at residues Lys134–Gly167 and Ser175–Gly208. Over residues Gln169 to Gly178 the composition is skewed to polar residues. Over residues Lys221–Glu232 the composition is skewed to basic and acidic residues. The span at Ser233–Ser242 shows a compositional bias: acidic residues. A compositionally biased stretch (basic and acidic residues) spans Ala305–Gly316. Positions Glu324–Val333 are enriched in acidic residues.

In terms of assembly, component of the spliceosome B complex. Associated with U2 snRNPs. Binds splicing factors SNRPB, SNRPC and SF1.

It is found in the nucleus. Its subcellular location is the nucleus speckle. Its function is as follows. Involved in pre-mRNA splicing as a component of the spliceosome. May play a role in cross-intron bridging of U1 and U2 snRNPs in the mammalian A complex. The chain is WW domain-binding protein 4 (WBP4) from Gallus gallus (Chicken).